Consider the following 323-residue polypeptide: Acetyl esterase (323 aa).

The short motif at 91-93 is the Involved in the stabilization of the negatively charged intermediate by the formation of the oxyanion hole element; that stretch reads HGG. Catalysis depends on residues S165, D262, and H292.

Belongs to the 'GDXG' lipolytic enzyme family. In terms of assembly, homodimer. Interacts with MalT and MelA.

The protein resides in the cytoplasm. In terms of biological role, displays esterase activity towards short chain fatty esters (acyl chain length of up to 8 carbons). Able to hydrolyze triacetylglycerol (triacetin) and tributyrylglycerol (tributyrin), but not trioleylglycerol (triolein) or cholesterol oleate. Negatively regulates MalT activity by antagonizing maltotriose binding. Inhibits MelA galactosidase activity. In Salmonella dublin (strain CT_02021853), this protein is Acetyl esterase.